Reading from the N-terminus, the 412-residue chain is Subtilisin-like protease 6 (412 aa).

Residues 1–20 (MGFITKAIPIVLAALSTVNG) form the signal peptide. Residues 21-127 (AKILEAGPHA…VRTSTNGTNL (107 aa)) constitute a propeptide that is removed on maturation. The Inhibitor I9 domain occupies 36–120 (KYIVVMKREV…YIEPDFVVRT (85 aa)). N-linked (GlcNAc...) asparagine glycosylation is found at Asn123 and Asn126. Residues 135–412 (SWGLARVSSK…SKLIYNGSGK (278 aa)) enclose the Peptidase S8 domain. Catalysis depends on charge relay system residues Asp167 and His198. N-linked (GlcNAc...) asparagine glycosylation is found at Asn252 and Asn264. Ser358 functions as the Charge relay system in the catalytic mechanism. N-linked (GlcNAc...) asparagine glycosylation occurs at Asn408.

It belongs to the peptidase S8 family.

The protein localises to the secreted. Its function is as follows. Secreted subtilisin-like serine protease with keratinolytic activity that contributes to pathogenicity. The polypeptide is Subtilisin-like protease 6 (SUB6) (Trichophyton tonsurans (Scalp ringworm fungus)).